A 499-amino-acid polypeptide reads, in one-letter code: Serine/threonine-protein phosphatase 5 (499 aa).

A disordered region spans residues 1–23 (MAMAEGERTECAEPPRDEPPADG). A2 carries the N-acetylalanine modification. TPR repeat units follow at residues 28–61 (AEEL…NPSN), 62–95 (AIYY…DKKY), and 96–129 (IKGY…KPHD). The catalytic stretch occupies residues 184–499 (GKVTISFMKE…ANTLLQLGMM (316 aa)). 3 residues coordinate Mn(2+): D242, H244, and D271. A substrate-binding site is contributed by H244. Substrate is bound by residues R275 and 303-304 (NH). N303 contributes to the Mn(2+) binding site. Residue H304 is the Proton donor/acceptor of the active site. Mn(2+) is bound at residue H352. Residues R400 and H427 each contribute to the substrate site. H427 provides a ligand contact to Mn(2+). A required for autoinhibition region spans residues 495-499 (QLGMM).

Belongs to the PPP phosphatase family. PP-5 (PP-T) subfamily. In terms of assembly, probably forms a complex composed of chaperones HSP90 and HSP70, co-chaperones STIP1/HOP, CDC37, PPP5C, PTGES3/p23, TSC1 and client protein TSC2. Probably forms a complex composed of chaperones HSP90 and HSP70, co-chaperones CDC37, PPP5C, TSC1 and client protein TSC2, CDK4, AKT, RAF1 and NR3C1; this complex does not contain co-chaperones STIP1/HOP and PTGES3/p23. Part of a complex with HSP90/HSP90AA1 and steroid receptors. Interacts (via TPR repeats) with HSP90AA1 (via TPR repeat-binding motif) or HSPA1A/HSPA1B; the interaction is direct and activates the phosphatase activity. Dissociates from HSPA1A/HSPA1B and HSP90AA1 in response to arachidonic acid. Interacts with CPNE1 (via VWFA domain). Interacts with CDC16, CDC27. Interacts with KLHDC10 (via the 6 Kelch repeats); inhibits the phosphatase activity on MAP3K5. Interacts with ATM and ATR; both interactions are induced by DNA damage and enhance ATM and ATR kinase activity. Interacts with RAD17; reduced by DNA damage. Interacts with nuclear receptors such as NR3C1/GCR and PPARG (activated by agonist); regulates their transactivation activities. Interacts (via TPR repeats) with S100 proteins S100A1, S100A2, S100A6, S100B and S100P; the interactions are calcium-dependent, strongly activate PPP5C phosphatase activity and compete with HSP90AA1 and MAP3K5 interactions. Interacts with SMAD2 and SMAD3 but not with SMAD1; decreases SMAD3 phosphorylation and protein levels. Interacts (via TPR repeats) with CRY1 and CRY2; the interaction with CRY2 down-regulates the phosphatase activity on CSNK1E. Interacts (via TPR repeats) with the active form of RAC1, GNA12 or GNA13; these interactions activate the phosphatase activity and translocate PPP5C to the cell membrane. Interacts with FLCN. Mg(2+) serves as cofactor. Requires Mn(2+) as cofactor. In terms of processing, activated by at least two different proteolytic cleavages producing a 56 kDa and a 50 kDa form. In terms of tissue distribution, ubiquitous.

It is found in the nucleus. The protein resides in the cytoplasm. The protein localises to the cell membrane. It catalyses the reaction O-phospho-L-seryl-[protein] + H2O = L-seryl-[protein] + phosphate. It carries out the reaction O-phospho-L-threonyl-[protein] + H2O = L-threonyl-[protein] + phosphate. With respect to regulation, autoinhibited. In the autoinhibited state, the TPR domain interacts with the catalytic region and prevents substrate access to the catalytic pocket. Allosterically activated by various polyunsaturated fatty acids, free long-chain fatty-acids and long-chain fatty acyl-CoA esters, arachidonic acid being the most effective activator. HSP90A and probably RAC1, GNA12 and GNA13 can also release the autoinhibition by the TPR repeat. Activation by RAC1, GNA12 and GNA13 is synergistic with the one produced by fatty acids binding. Inhibited by okadaic acid. Its function is as follows. Serine/threonine-protein phosphatase that dephosphorylates a myriad of proteins involved in different signaling pathways including the kinases CSNK1E, ASK1/MAP3K5, PRKDC and RAF1, the nuclear receptors NR3C1, PPARG, ESR1 and ESR2, SMAD proteins and TAU/MAPT. Implicated in wide ranging cellular processes, including apoptosis, differentiation, DNA damage response, cell survival, regulation of ion channels or circadian rhythms, in response to steroid and thyroid hormones, calcium, fatty acids, TGF-beta as well as oxidative and genotoxic stresses. Participates in the control of DNA damage response mechanisms such as checkpoint activation and DNA damage repair through, for instance, the regulation ATM/ATR-signaling and dephosphorylation of PRKDC and TP53BP1. Inhibits ASK1/MAP3K5-mediated apoptosis induced by oxidative stress. Plays a positive role in adipogenesis, mainly through the dephosphorylation and activation of PPARG transactivation function. Also dephosphorylates and inhibits the anti-adipogenic effect of NR3C1. Regulates the circadian rhythms, through the dephosphorylation and activation of CSNK1E. May modulate TGF-beta signaling pathway by the regulation of SMAD3 phosphorylation and protein expression levels. Dephosphorylates and may play a role in the regulation of TAU/MAPT. Through their dephosphorylation, may play a role in the regulation of ions channels such as KCNH2. Dephosphorylate FNIP1, disrupting interaction with HSP90AA1/Hsp90. This Homo sapiens (Human) protein is Serine/threonine-protein phosphatase 5 (PPP5C).